The sequence spans 687 residues: Dictomallein (687 aa).

Disordered stretches follow at residues 1–45 (MGNG…SRRL) and 73–112 (TAGG…STSA). In terms of domain architecture, Peptidase M66 spans 233-501 (PVFGTDADVQ…QAWIASRVLA (269 aa)). His393 serves as a coordination point for Zn(2+). Residue Glu394 is part of the active site. The Zn(2+) site is built by His397 and His403.

Belongs to the dictomallein family. The cofactor is Zn(2+).

The chain is Dictomallein (dtmL) from Burkholderia pseudomallei (strain 668).